The sequence spans 373 residues: NADPH-dependent 3-keto-steroid reductase Hsd3b5 (373 aa).

Residues G10–L15, Y155, and K159 contribute to the NADP(+) site. Residue K159 is the Proton donor of the active site. Residues L288–V308 traverse the membrane as a helical segment. At K350 the chain carries N6-acetyllysine.

This sequence belongs to the 3-beta-HSD family. Expressed in the male liver, starting in late puberty.

The protein resides in the endoplasmic reticulum membrane. It localises to the mitochondrion membrane. The enzyme catalyses a 3beta-hydroxysteroid + NADP(+) = a 3-oxosteroid + NADPH + H(+). It carries out the reaction 5alpha-androstane-3beta,17beta-diol + NADP(+) = 17beta-hydroxy-5alpha-androstan-3-one + NADPH + H(+). It participates in steroid metabolism. In terms of biological role, responsible for the reduction of the oxo group on the C-3 of 5alpha-androstane steroids. Catalyzes the conversion of dihydrotestosterone to its inactive form 5alpha-androstanediol, that does not bind androgen receptor/AR. Does not function as an isomerase. The protein is NADPH-dependent 3-keto-steroid reductase Hsd3b5 of Mus musculus (Mouse).